The following is a 122-amino-acid chain: Ribonuclease P protein component (122 aa).

This sequence belongs to the RnpA family. Consists of a catalytic RNA component (M1 or rnpB) and a protein subunit.

The catalysed reaction is Endonucleolytic cleavage of RNA, removing 5'-extranucleotides from tRNA precursor.. RNaseP catalyzes the removal of the 5'-leader sequence from pre-tRNA to produce the mature 5'-terminus. It can also cleave other RNA substrates such as 4.5S RNA. The protein component plays an auxiliary but essential role in vivo by binding to the 5'-leader sequence and broadening the substrate specificity of the ribozyme. The chain is Ribonuclease P protein component from Lactobacillus helveticus (strain DPC 4571).